The chain runs to 252 residues: Imidazole glycerol phosphate synthase subunit HisF (252 aa).

Residues aspartate 11 and aspartate 130 contribute to the active site.

This sequence belongs to the HisA/HisF family. Heterodimer of HisH and HisF.

Its subcellular location is the cytoplasm. The catalysed reaction is 5-[(5-phospho-1-deoxy-D-ribulos-1-ylimino)methylamino]-1-(5-phospho-beta-D-ribosyl)imidazole-4-carboxamide + L-glutamine = D-erythro-1-(imidazol-4-yl)glycerol 3-phosphate + 5-amino-1-(5-phospho-beta-D-ribosyl)imidazole-4-carboxamide + L-glutamate + H(+). The protein operates within amino-acid biosynthesis; L-histidine biosynthesis; L-histidine from 5-phospho-alpha-D-ribose 1-diphosphate: step 5/9. Its function is as follows. IGPS catalyzes the conversion of PRFAR and glutamine to IGP, AICAR and glutamate. The HisF subunit catalyzes the cyclization activity that produces IGP and AICAR from PRFAR using the ammonia provided by the HisH subunit. The chain is Imidazole glycerol phosphate synthase subunit HisF from Paramagnetospirillum magneticum (strain ATCC 700264 / AMB-1) (Magnetospirillum magneticum).